Reading from the N-terminus, the 80-residue chain is Myocilin opposite strand protein (80 aa).

A disordered region spans residues 53 to 80 (EQAPPPHRTYLTVPPAPPPSPAEDPTVS).

The polypeptide is Myocilin opposite strand protein (Homo sapiens (Human)).